Consider the following 284-residue polypeptide: Avenin-like b6 (284 aa).

The signal sequence occupies residues 1–18; sequence MKVFILALLALAATTAIA.

It belongs to the prolamin family. Post-translationally, contains disulfide bonds.

Functionally, seed storage protein. Might be integrated via inter-chain disulfide bonds within the glutenin polymer. In Triticum aestivum (Wheat), this protein is Avenin-like b6.